We begin with the raw amino-acid sequence, 108 residues long: uncharacterized protein (108 aa).

This is an uncharacterized protein from Saccharomyces cerevisiae (strain ATCC 204508 / S288c) (Baker's yeast).